Here is a 284-residue protein sequence, read N- to C-terminus: Avenin-like b4 (284 aa).

The N-terminal stretch at 1–18 is a signal peptide; it reads MKVFILALLALTATTAIA.

The protein belongs to the prolamin family. Post-translationally, contains disulfide bonds.

In terms of biological role, seed storage protein. Might be integrated via inter-chain disulfide bonds within the glutenin polymer. This chain is Avenin-like b4, found in Triticum aestivum (Wheat).